The chain runs to 249 residues: Uroplakin-3b-like protein 1 (249 aa).

The first 26 residues, 1–26 (MGPHGKQSVLRMPLLLLLTCVQSGTG), serve as a signal peptide directing secretion. At 27-194 (LESINYAPQL…PGSQGKGTVV (168 aa)) the chain is on the extracellular side. N-linked (GlcNAc...) asparagine glycosylation is found at Asn63, Asn82, and Asn133. Residues 195 to 215 (IIAFLSILLAILLVVFLVLVI) traverse the membrane as a helical segment. The Cytoplasmic portion of the chain corresponds to 216–249 (SACLSTSGSSPEEQVRMRHYHTHHMGSLRAERSS).

This sequence belongs to the uroplakin-3 family.

The protein localises to the membrane. The protein is Uroplakin-3b-like protein 1 of Mus musculus (Mouse).